The following is a 366-amino-acid chain: MYGILVLEDGTIIRGDGFGAETEVLGELVFNTSMTGYVEILTDPSYKGQIVTMTYPLEGNYGVEKEWFESDGIKAEGFVVKDMTGLKLDEFLKEYNIPGISGVDTRYITRKIRSKGVIRSLLKTSTNPITKDEETELIKKVVEYPDISEIDLVPEVSTKETVVYSADDEKTKCVLIDCGVKQSIVNCLVERGCSVIKVPYNSKKEEILSYTPDFVLVSNGPGDPENMAETVDTVKNLIGTLPVTGICLGHQIITIALGGKTYKLKFGHRGGNQPVKDIESGKVYITSQNHGFATDDCVVPTGSELMHMNLNDDTVEGIRKIESEDLKNTVWSVQYHPEAGPGPHDARFLFDEMVELGIKFKAEKAN.

The CPSase stretch occupies residues 1-168 (MYGILVLEDG…KETVVYSADD (168 aa)). Residues Ser-45, Gly-220, and Gly-222 each coordinate L-glutamine. The 192-residue stretch at 172-363 (KCVLIDCGVK…VELGIKFKAE (192 aa)) folds into the Glutamine amidotransferase type-1 domain. Residue Cys-247 is the Nucleophile of the active site. The L-glutamine site is built by Leu-248, Gln-251, Asn-289, Gly-291, and Phe-292. Catalysis depends on residues His-336 and Glu-338.

The protein belongs to the CarA family. In terms of assembly, composed of two chains; the small (or glutamine) chain promotes the hydrolysis of glutamine to ammonia, which is used by the large (or ammonia) chain to synthesize carbamoyl phosphate. Tetramer of heterodimers (alpha,beta)4.

It carries out the reaction hydrogencarbonate + L-glutamine + 2 ATP + H2O = carbamoyl phosphate + L-glutamate + 2 ADP + phosphate + 2 H(+). The enzyme catalyses L-glutamine + H2O = L-glutamate + NH4(+). Its pathway is amino-acid biosynthesis; L-arginine biosynthesis; carbamoyl phosphate from bicarbonate: step 1/1. The protein operates within pyrimidine metabolism; UMP biosynthesis via de novo pathway; (S)-dihydroorotate from bicarbonate: step 1/3. Functionally, small subunit of the glutamine-dependent carbamoyl phosphate synthetase (CPSase). CPSase catalyzes the formation of carbamoyl phosphate from the ammonia moiety of glutamine, carbonate, and phosphate donated by ATP, constituting the first step of 2 biosynthetic pathways, one leading to arginine and/or urea and the other to pyrimidine nucleotides. The small subunit (glutamine amidotransferase) binds and cleaves glutamine to supply the large subunit with the substrate ammonia. This is Carbamoyl phosphate synthase small chain from Methanococcus maripaludis (strain C6 / ATCC BAA-1332).